The following is a 400-amino-acid chain: Enoyl-[acyl-carrier-protein] reductase [NADH] 1 (400 aa).

NAD(+) is bound by residues 48 to 53 (GSSSGY), 74 to 75 (FE), 111 to 112 (DA), and 139 to 140 (LA). Tyrosine 225 is a binding site for substrate. Tyrosine 235 (proton donor) is an active-site residue. Residues lysine 244 and 273–275 (VVT) each bind NAD(+).

Belongs to the TER reductase family. Monomer.

It catalyses the reaction a 2,3-saturated acyl-[ACP] + NAD(+) = a (2E)-enoyl-[ACP] + NADH + H(+). The protein operates within lipid metabolism; fatty acid biosynthesis. Involved in the final reduction of the elongation cycle of fatty acid synthesis (FAS II). Catalyzes the reduction of a carbon-carbon double bond in an enoyl moiety that is covalently linked to an acyl carrier protein (ACP). The protein is Enoyl-[acyl-carrier-protein] reductase [NADH] 1 of Photobacterium profundum (strain SS9).